Here is a 105-residue protein sequence, read N- to C-terminus: Large ribosomal subunit protein eL36 (105 aa).

A disordered region spans residues 1-20; that stretch reads MAKEAPAKTGLAVGLNKGHK.

This sequence belongs to the eukaryotic ribosomal protein eL36 family.

The sequence is that of Large ribosomal subunit protein eL36 (rpl36) from Trichoderma hamatum.